The chain runs to 736 residues: DNA topoisomerase 1 (736 aa).

A Toprim domain is found at 2–113 (KHLIIVESPA…SYPRIVFHEI (112 aa)). The Mg(2+) site is built by glutamate 8 and aspartate 82. In terms of domain architecture, Topo IA-type catalytic spans 129–552 (DMFKVNAQQA…DFYYPFMDKI (424 aa)). The interaction with DNA stretch occupies residues 163–168 (SAGRVQ). Catalysis depends on tyrosine 297, which acts as the O-(5'-phospho-DNA)-tyrosine intermediate. 4 C4-type zinc fingers span residues 572 to 598 (CPKC…YPKC), 616 to 642 (CEKC…YPEC), 663 to 689 (CPEC…YPKC), and 702 to 725 (CEKC…CIQC).

This sequence belongs to the type IA topoisomerase family. As to quaternary structure, monomer. Mg(2+) serves as cofactor.

It carries out the reaction ATP-independent breakage of single-stranded DNA, followed by passage and rejoining.. Its function is as follows. Releases the supercoiling and torsional tension of DNA, which is introduced during the DNA replication and transcription, by transiently cleaving and rejoining one strand of the DNA duplex. Introduces a single-strand break via transesterification at a target site in duplex DNA. The scissile phosphodiester is attacked by the catalytic tyrosine of the enzyme, resulting in the formation of a DNA-(5'-phosphotyrosyl)-enzyme intermediate and the expulsion of a 3'-OH DNA strand. The free DNA strand then undergoes passage around the unbroken strand, thus removing DNA supercoils. Finally, in the religation step, the DNA 3'-OH attacks the covalent intermediate to expel the active-site tyrosine and restore the DNA phosphodiester backbone. This is DNA topoisomerase 1 from Helicobacter pylori (strain J99 / ATCC 700824) (Campylobacter pylori J99).